We begin with the raw amino-acid sequence, 426 residues long: Transcription factor bHLH60 (426 aa).

Polar residues-rich tracts occupy residues 117-137 (QNGN…SSAN) and 148-172 (TDSS…QNNR). Residues 117-201 (QNGNISGETP…SSEENEKLPY (85 aa)) are disordered. Residues 191 to 200 (KSSEENEKLP) show a composition bias toward basic and acidic residues. A bHLH domain is found at 210-307 (QATDSHSLAE…DEIINHVQSL (98 aa)). The disordered stretch occupies residues 367–398 (HRQLQQPPTQQWPFDGLNQPVWGREEDQAHGN).

In terms of assembly, homodimer. As to expression, expressed constitutively in roots, leaves, stems, and flowers.

The protein resides in the nucleus. This chain is Transcription factor bHLH60 (BHLH60), found in Arabidopsis thaliana (Mouse-ear cress).